The following is a 501-amino-acid chain: Arabinose import ATP-binding protein AraG (501 aa).

ABC transporter domains are found at residues 4-239 and 252-495; these read LEFN…MVGR and LGDN…LPDK. 36–43 lines the ATP pocket; sequence GENGAGKS.

It belongs to the ABC transporter superfamily. Arabinose importer (TC 3.A.1.2.2) family. The complex is composed of two ATP-binding proteins (AraG), two transmembrane proteins (AraH) and a solute-binding protein (AraF).

It is found in the cell inner membrane. It carries out the reaction L-arabinose(out) + ATP + H2O = L-arabinose(in) + ADP + phosphate + H(+). Part of the ABC transporter complex AraFGH involved in arabinose import. Responsible for energy coupling to the transport system. The chain is Arabinose import ATP-binding protein AraG from Rhizobium etli (strain ATCC 51251 / DSM 11541 / JCM 21823 / NBRC 15573 / CFN 42).